We begin with the raw amino-acid sequence, 143 residues long: Histone H2AX (143 aa).

The disordered stretch occupies residues 1–22 (MSGRGKTGGKARAKAKSRSSRA). Residue serine 2 is modified to N-acetylserine. Residue serine 2 is modified to Phosphoserine. Residues lysine 6 and lysine 10 each carry the N6-acetyllysine modification. Positions 7 to 19 (TGGKARAKAKSRS) are enriched in basic residues. Lysine 10 is subject to N6-lactoyllysine; alternate. Glycyl lysine isopeptide (Lys-Gly) (interchain with G-Cter in ubiquitin) cross-links involve residues lysine 14 and lysine 16. At lysine 37 the chain carries N6-acetyllysine. Lysine 120 participates in a covalent cross-link: Glycyl lysine isopeptide (Lys-Gly) (interchain with G-Cter in ubiquitin). Residues 121 to 143 (TSATVGPKAPSGGKKATQASQEY) are disordered. A Phosphoserine modification is found at serine 122. Residues lysine 128 and lysine 135 each participate in a glycyl lysine isopeptide (Lys-Gly) (interchain with G-Cter in SUMO2) cross-link. Phosphoserine; by ATM, ATR and PRKDC is present on serine 140. The [ST]-Q motif signature appears at 140–141 (SQ). At tyrosine 143 the chain carries Phosphotyrosine; by WSTF.

It belongs to the histone H2A family. As to quaternary structure, the nucleosome is a histone octamer containing two molecules each of H2A, H2B, H3 and H4 assembled in one H3-H4 heterotetramer and two H2A-H2B heterodimers. The octamer wraps approximately 147 bp of DNA. Interacts with numerous proteins required for DNA damage signaling and repair when phosphorylated on Ser-140. These include MDC1, TP53BP1, BRCA1 and the MRN complex, composed of MRE11, RAD50, and NBN. Interaction with the MRN complex is mediated at least in part by NBN. Also interacts with DHX9/NDHII when phosphorylated on Ser-140 and MCPH1 when phosphorylated at Ser-140 or Tyr-143. Interacts with ARRB2; the interaction is detected in the nucleus upon OR1D2 stimulation. Interacts with WRAP53/TCAB1. Interacts with HDGFL2. Interacts with DNA damage up-regulated protein DDUP. Forms a complex with DDUP and RAD18 following DDUP phosphorylation. (Microbial infection) Interacts with Epstein-Barr virus protein EBNA6. Post-translationally, phosphorylated by VRK1. Phosphorylated on Ser-140 (to form gamma-H2AX or H2AX139ph) in response to DNA double strand breaks (DSBs) generated by exogenous genotoxic agents and by stalled replication forks, and may also occur during meiotic recombination events and immunoglobulin class switching in lymphocytes. Phosphorylation can extend up to several thousand nucleosomes from the actual site of the DSB and may mark the surrounding chromatin for recruitment of proteins required for DNA damage signaling and repair. Widespread phosphorylation may also serve to amplify the damage signal or aid repair of persistent lesions. Phosphorylation of Ser-140 (H2AX139ph) in response to ionizing radiation is mediated by both ATM and PRKDC while defects in DNA replication induce Ser-140 phosphorylation (H2AX139ph) subsequent to activation of ATR and PRKDC. Dephosphorylation of Ser-140 by PP2A is required for DNA DSB repair. In meiosis, Ser-140 phosphorylation (H2AX139ph) may occur at synaptonemal complexes during leptotene as an ATM-dependent response to the formation of programmed DSBs by SPO11. Ser-140 phosphorylation (H2AX139ph) may subsequently occurs at unsynapsed regions of both autosomes and the XY bivalent during zygotene, downstream of ATR and BRCA1 activation. Ser-140 phosphorylation (H2AX139ph) may also be required for transcriptional repression of unsynapsed chromatin and meiotic sex chromosome inactivation (MSCI), whereby the X and Y chromosomes condense in pachytene to form the heterochromatic XY-body. During immunoglobulin class switch recombination in lymphocytes, Ser-140 phosphorylation (H2AX139ph) may occur at sites of DNA-recombination subsequent to activation of the activation-induced cytidine deaminase AICDA. Phosphorylation at Tyr-143 (H2AXY142ph) by BAZ1B/WSTF determines the relative recruitment of either DNA repair or pro-apoptotic factors. Phosphorylation at Tyr-143 (H2AXY142ph) favors the recruitment of APBB1/FE65 and pro-apoptosis factors such as MAPK8/JNK1, triggering apoptosis. In contrast, dephosphorylation of Tyr-143 by EYA proteins (EYA1, EYA2, EYA3 or EYA4) favors the recruitment of MDC1-containing DNA repair complexes to the tail of phosphorylated Ser-140 (H2AX139ph). Monoubiquitination of Lys-120 (H2AXK119ub) by RING1 and RNF2/RING2 complex gives a specific tag for epigenetic transcriptional repression. Following DNA double-strand breaks (DSBs), it is ubiquitinated through 'Lys-63' linkage of ubiquitin moieties by the E2 ligase UBE2N and the E3 ligases RNF8 and RNF168, leading to the recruitment of repair proteins to sites of DNA damage. Ubiquitination at Lys-14 and Lys-16 (H2AK13Ub and H2AK15Ub, respectively) in response to DNA damage is initiated by RNF168 that mediates monoubiquitination at these 2 sites, and 'Lys-63'-linked ubiquitin are then conjugated to monoubiquitin; RNF8 is able to extend 'Lys-63'-linked ubiquitin chains in vitro. H2AK119Ub and ionizing radiation-induced 'Lys-63'-linked ubiquitination (H2AK13Ub and H2AK15Ub) are distinct events. In terms of processing, acetylation at Lys-6 (H2AXK5ac) by KAT5 component of the NuA4 histone acetyltransferase complex promotes NBN/NBS1 assembly at the sites of DNA damage. Acetylation at Lys-37 increases in S and G2 phases. This modification has been proposed to play a role in DNA double-strand break repair.

The protein localises to the nucleus. Its subcellular location is the chromosome. In terms of biological role, variant histone H2A which replaces conventional H2A in a subset of nucleosomes. Nucleosomes wrap and compact DNA into chromatin, limiting DNA accessibility to the cellular machineries which require DNA as a template. Histones thereby play a central role in transcription regulation, DNA repair, DNA replication and chromosomal stability. DNA accessibility is regulated via a complex set of post-translational modifications of histones, also called histone code, and nucleosome remodeling. Required for checkpoint-mediated arrest of cell cycle progression in response to low doses of ionizing radiation and for efficient repair of DNA double strand breaks (DSBs) specifically when modified by C-terminal phosphorylation. This chain is Histone H2AX, found in Homo sapiens (Human).